The sequence spans 616 residues: MPKYRSATTTHGRNMAGARALWRATGMTDADFGKPIIAVVNSFTQFVPGHVHLRDLGKLVAEQIEAAGGVAKEFNTIAVDDGIAMGHGGMLYSLPSRELIADSVEYMVNAHCADAMVCISNCDKITPGMLMASLRLNIPVIFVSGGPMEAGKTKLSDKIIKLDLVDAMIQGADPKVSDEQSNQVERSACPTCGSCSGMFTANSMNCLTEALGLSQPGNGSLLATHADRKELFLNAGKRIVELTKRYYEQDDASALPRNIASKAAFENAMTLDIAMGGSTNTVLHLLAAAQEAEIDFTMSDIDKLSRKVPQLCKVAPSTQKYHMEDVHRAGGVLGILGELDRAGLLNREVKNVLGLTLPQTLEQYDVMVTQDDAVKKMFRAGPAGIRTTQAFSQDCRWDTLDDDRAEGCIRSLEHAYSKDGGLAVLYGNFAENGCIVKTAGVDDSILKFTGPAKVYESQDDAVEAILGGKVVEGDVVVIRYEGPKGGPGMQEMLYPTSFLKSMGLGKACALITDGRFSGGTSGLSIGHVSPEAASGGNIALIEDGDMIAIDIPNRSIQLQLSDAEIAARREAQEARGDQAWTPKNRQRQVSFALRAYASLATSADKGAVRDKSKLGG.

Asp-81 lines the Mg(2+) pocket. Residue Cys-122 coordinates [2Fe-2S] cluster. Mg(2+) contacts are provided by Asp-123 and Lys-124. Lys-124 bears the N6-carboxylysine mark. Residue Cys-195 participates in [2Fe-2S] cluster binding. Glu-491 is a Mg(2+) binding site. Ser-517 functions as the Proton acceptor in the catalytic mechanism.

The protein belongs to the IlvD/Edd family. In terms of assembly, homodimer. The cofactor is [2Fe-2S] cluster. Mg(2+) is required as a cofactor.

The catalysed reaction is (2R)-2,3-dihydroxy-3-methylbutanoate = 3-methyl-2-oxobutanoate + H2O. It carries out the reaction (2R,3R)-2,3-dihydroxy-3-methylpentanoate = (S)-3-methyl-2-oxopentanoate + H2O. The protein operates within amino-acid biosynthesis; L-isoleucine biosynthesis; L-isoleucine from 2-oxobutanoate: step 3/4. It functions in the pathway amino-acid biosynthesis; L-valine biosynthesis; L-valine from pyruvate: step 3/4. In terms of biological role, functions in the biosynthesis of branched-chain amino acids. Catalyzes the dehydration of (2R,3R)-2,3-dihydroxy-3-methylpentanoate (2,3-dihydroxy-3-methylvalerate) into 2-oxo-3-methylpentanoate (2-oxo-3-methylvalerate) and of (2R)-2,3-dihydroxy-3-methylbutanoate (2,3-dihydroxyisovalerate) into 2-oxo-3-methylbutanoate (2-oxoisovalerate), the penultimate precursor to L-isoleucine and L-valine, respectively. The protein is Dihydroxy-acid dehydratase of Klebsiella pneumoniae subsp. pneumoniae (strain ATCC 700721 / MGH 78578).